We begin with the raw amino-acid sequence, 495 residues long: Lysine--tRNA ligase (495 aa).

Mg(2+) contacts are provided by Glu406 and Glu413.

This sequence belongs to the class-II aminoacyl-tRNA synthetase family. Homodimer. Requires Mg(2+) as cofactor.

The protein localises to the cytoplasm. It carries out the reaction tRNA(Lys) + L-lysine + ATP = L-lysyl-tRNA(Lys) + AMP + diphosphate. The polypeptide is Lysine--tRNA ligase (Staphylococcus aureus (strain MW2)).